The chain runs to 551 residues: GMP synthase [glutamine-hydrolyzing] (551 aa).

A Glutamine amidotransferase type-1 domain is found at K40–D233. The Nucleophile role is filled by C117. Residues H207 and E209 contribute to the active site. Positions W234 to R426 constitute a GMPS ATP-PPase domain. Residue S261–A267 participates in ATP binding.

As to quaternary structure, homodimer.

It catalyses the reaction XMP + L-glutamine + ATP + H2O = GMP + L-glutamate + AMP + diphosphate + 2 H(+). It functions in the pathway purine metabolism; GMP biosynthesis; GMP from XMP (L-Gln route): step 1/1. Its function is as follows. Catalyzes the synthesis of GMP from XMP. This is GMP synthase [glutamine-hydrolyzing] from Bradyrhizobium diazoefficiens (strain JCM 10833 / BCRC 13528 / IAM 13628 / NBRC 14792 / USDA 110).